The following is a 251-amino-acid chain: Capsid protein (251 aa).

The short motif at 3–20 (KRDAPWRLMAGTSKVSRS) is the Bipartite nuclear localization signal element. The Nuclear localization signal motif lies at 35-49 (KAAAWVNRPMYRKPR). The segment at 63 to 80 (CEGPCKVQSYEQRHDISH) is a zinc-finger region. The short motif at 96–117 (ITHRVGKRFCVKSVYILGKIWM) is the Nuclear export signal element. The Bipartite nuclear localization signal signature appears at 195 to 242 (RRFWKVNNHVVYNHQEAGKYENHTENALLLYMACTHASNPVYATLKIR).

The protein belongs to the geminiviridae capsid protein family. As to quaternary structure, homomultimer. Binds to single-stranded and double-stranded viral DNA. Interacts (via nuclear localization signals) with host importin alpha-1a.

It localises to the virion. The protein resides in the host nucleus. Encapsidates the viral DNA into characteristic twinned ('geminate') particles. Binds the genomic viral ssDNA and shuttles it into and out of the cell nucleus. The CP of bipartite geminiviruses is not required for cell-to-cell or systemic movement. The chain is Capsid protein from Squash leaf curl virus (SLCV).